Reading from the N-terminus, the 194-residue chain is Thymidine kinase (194 aa).

Residues 15 to 22 (GSMFSGKS) and 88 to 91 (DEVQ) each bind ATP. Residue Glu-89 is the Proton acceptor of the active site. Zn(2+)-binding residues include Cys-145, Cys-148, Cys-183, and Cys-186.

The protein belongs to the thymidine kinase family. In terms of assembly, homotetramer.

The protein localises to the cytoplasm. The catalysed reaction is thymidine + ATP = dTMP + ADP + H(+). The sequence is that of Thymidine kinase from Bacillus cereus (strain AH820).